Consider the following 272-residue polypeptide: N-acetylmuramoyl-L-alanine amidase CwlA (272 aa).

The 119-residue stretch at 24–142 folds into the N-acetylmuramoyl-L-alanine amidase domain; it reads KAEYITIHNT…QDWNGKYCPH (119 aa).

It belongs to the N-acetylmuramoyl-L-alanine amidase 2 family.

It carries out the reaction Hydrolyzes the link between N-acetylmuramoyl residues and L-amino acid residues in certain cell-wall glycopeptides.. Its function is as follows. Autolysins are involved in some important biological processes such as cell separation, cell-wall turnover, competence for genetic transformation, formation of the flagella and sporulation. This Bacillus subtilis (strain 168) protein is N-acetylmuramoyl-L-alanine amidase CwlA (cwlA).